We begin with the raw amino-acid sequence, 95 residues long: Translation initiation factor 1A (95 aa).

An S1-like domain is found at serine 6–glutamate 80.

It belongs to the eIF-1A family.

Seems to be required for maximal rate of protein biosynthesis. Enhances ribosome dissociation into subunits and stabilizes the binding of the initiator Met-tRNA(I) to 40 S ribosomal subunits. The protein is Translation initiation factor 1A of Haloarcula marismortui (strain ATCC 43049 / DSM 3752 / JCM 8966 / VKM B-1809) (Halobacterium marismortui).